The primary structure comprises 251 residues: Hydroxyacylglutathione hydrolase (251 aa).

Residues His53, His55, Asp57, His58, His110, Asp127, and His165 each coordinate Zn(2+).

Belongs to the metallo-beta-lactamase superfamily. Glyoxalase II family. In terms of assembly, monomer. Requires Zn(2+) as cofactor.

The enzyme catalyses an S-(2-hydroxyacyl)glutathione + H2O = a 2-hydroxy carboxylate + glutathione + H(+). The protein operates within secondary metabolite metabolism; methylglyoxal degradation; (R)-lactate from methylglyoxal: step 2/2. Thiolesterase that catalyzes the hydrolysis of S-D-lactoyl-glutathione to form glutathione and D-lactic acid. This Yersinia pestis protein is Hydroxyacylglutathione hydrolase.